We begin with the raw amino-acid sequence, 264 residues long: Isoprenyl transferase (264 aa).

D43 is an active-site residue. D43 contributes to the Mg(2+) binding site. Substrate contacts are provided by residues 44–47, W48, R56, H60, and 88–90; these read GNGR and STE. N91 acts as the Proton acceptor in catalysis. Substrate-binding positions include W92, R94, R211, and 217–219; that span reads RTS. Mg(2+) is bound at residue E230.

Belongs to the UPP synthase family. In terms of assembly, homodimer. It depends on Mg(2+) as a cofactor.

Catalyzes the condensation of isopentenyl diphosphate (IPP) with allylic pyrophosphates generating different type of terpenoids. The polypeptide is Isoprenyl transferase (Bifidobacterium longum (strain NCC 2705)).